Here is a 161-residue protein sequence, read N- to C-terminus: Probable chemoreceptor glutamine deamidase CheD (161 aa).

Belongs to the CheD family.

It carries out the reaction L-glutaminyl-[protein] + H2O = L-glutamyl-[protein] + NH4(+). Its function is as follows. Probably deamidates glutamine residues to glutamate on methyl-accepting chemotaxis receptors (MCPs), playing an important role in chemotaxis. This Lachnoclostridium phytofermentans (strain ATCC 700394 / DSM 18823 / ISDg) (Clostridium phytofermentans) protein is Probable chemoreceptor glutamine deamidase CheD.